The primary structure comprises 582 residues: ATP-dependent lipid A-core flippase (582 aa).

A run of 5 helical transmembrane segments spans residues 25 to 45 (AGLI…TFML), 69 to 89 (LAVI…SYCI), 137 to 159 (ASSS…LFIM), 253 to 273 (PIIQ…ASFP), and 275 to 295 (VMET…IALM). Positions 28–310 (IVAAIALILN…LTNVNTQFQR (283 aa)) constitute an ABC transmembrane type-1 domain. Residues 342–578 (IEFRHVTFYY…QGVYAQLNRM (237 aa)) form the ABC transporter domain. 376-383 (GRSGSGKS) is an ATP binding site.

The protein belongs to the ABC transporter superfamily. Lipid exporter (TC 3.A.1.106) family. Homodimer.

The protein resides in the cell inner membrane. It carries out the reaction ATP + H2O + lipid A-core oligosaccharideSide 1 = ADP + phosphate + lipid A-core oligosaccharideSide 2.. Functionally, involved in lipopolysaccharide (LPS) biosynthesis. Translocates lipid A-core from the inner to the outer leaflet of the inner membrane. Transmembrane domains (TMD) form a pore in the inner membrane and the ATP-binding domain (NBD) is responsible for energy generation. The polypeptide is ATP-dependent lipid A-core flippase (Yersinia pestis bv. Antiqua (strain Antiqua)).